A 142-amino-acid chain; its full sequence is Large ribosomal subunit protein bL17 (142 aa).

Belongs to the bacterial ribosomal protein bL17 family. As to quaternary structure, part of the 50S ribosomal subunit. Contacts protein L32.

The sequence is that of Large ribosomal subunit protein bL17 from Bartonella henselae (strain ATCC 49882 / DSM 28221 / CCUG 30454 / Houston 1) (Rochalimaea henselae).